The primary structure comprises 352 residues: Ketoisovalerate oxidoreductase subunit VorB (352 aa).

Heterotrimer of the VorA, VorB and VorC subunits.

It catalyses the reaction 3-methyl-2-oxobutanoate + 2 oxidized [2Fe-2S]-[ferredoxin] + CoA = 2-methylpropanoyl-CoA + 2 reduced [2Fe-2S]-[ferredoxin] + CO2 + H(+). In Methanothermobacter marburgensis (strain ATCC BAA-927 / DSM 2133 / JCM 14651 / NBRC 100331 / OCM 82 / Marburg) (Methanobacterium thermoautotrophicum), this protein is Ketoisovalerate oxidoreductase subunit VorB (vorB).